The following is a 172-amino-acid chain: Type II secretion system protein H (172 aa).

Residues 1–6 constitute a propeptide, leader sequence; the sequence is MRASRG. Residue Phe-7 is modified to N-methylphenylalanine. A helical membrane pass occupies residues 7-27; sequence FTLIELMVVMVIISVLIGLAV.

Belongs to the GSP H family. In terms of assembly, type II secretion is composed of four main components: the outer membrane complex, the inner membrane complex, the cytoplasmic secretion ATPase and the periplasm-spanning pseudopilus. Forms the tip of the type II pseudopilus by interacting with XcpV, XcpW and XcpX. Interacts with core component XcpT. In terms of processing, cleaved by prepilin peptidase. Post-translationally, methylated by prepilin peptidase at the amino group of the N-terminal phenylalanine once the leader sequence is cleaved by prepilin peptidase.

The protein localises to the cell inner membrane. In terms of biological role, component of the type II secretion system required for the energy-dependent secretion of extracellular factors such as proteases and toxins from the periplasm. Part of the pseudopilus tip complex that is critical for the recognition and binding of secretion substrates. Type II pseudopilus confers increased bacterial adhesive capabilities. This chain is Type II secretion system protein H (xcpU), found in Pseudomonas aeruginosa (strain ATCC 15692 / DSM 22644 / CIP 104116 / JCM 14847 / LMG 12228 / 1C / PRS 101 / PAO1).